Consider the following 141-residue polypeptide: Ribosome-binding factor A (141 aa).

Belongs to the RbfA family. Monomer. Binds 30S ribosomal subunits, but not 50S ribosomal subunits or 70S ribosomes.

The protein resides in the cytoplasm. In terms of biological role, one of several proteins that assist in the late maturation steps of the functional core of the 30S ribosomal subunit. Associates with free 30S ribosomal subunits (but not with 30S subunits that are part of 70S ribosomes or polysomes). Required for efficient processing of 16S rRNA. May interact with the 5'-terminal helix region of 16S rRNA. The sequence is that of Ribosome-binding factor A from Beijerinckia indica subsp. indica (strain ATCC 9039 / DSM 1715 / NCIMB 8712).